The sequence spans 512 residues: MARAVHRSGLVALGIATALMASCAFAAKDVVVAVGSNFTTLDPYDANDTLSQAVAKSFYQGLFGLDKEMKLKNVLAESYTVSDDGITYTVKLREGIKFQDGTDFNAVAVKANLDRASDPANHLKRYNLYKNIAKTEAIDPTTVKITLKQPFSAFINILAHPATAMISPTALEKYGKEIGFHPVGTGPYELDTWNQTDFVKVKKFAGYWQPGLPKLDSITWRPVADNNTRAAMLQTGEAQFAFPIPYEQATLLEKNKNIELMASPSIMQRYISMNVTQKPFDNPKVREALNYAINRPALVKVAFAGYATPATGVVPPSIAYAQSYKPWPYDPVKARELLKEAGYPNGFSTTLWSSHNHSTAQKVLQFTQQQLAQVGIKAQVTAMDAGQRAAEVEGKGQKESGVRMFYTGWSASTGEADWALSPLFASQNWPPTLFNTAFYSNKQVDDFLAQALKTNDPAEKTRLYKAAQDIIWQESPWIPLVVEKLVSAHSKNLTGFWIMPDTGFSFEDADLQ.

The N-terminal stretch at 1–26 (MARAVHRSGLVALGIATALMASCAFA) is a signal peptide.

Belongs to the bacterial solute-binding protein 5 family. The complex is composed of two ATP-binding proteins (GsiA), two transmembrane proteins (GsiC and GsiD) and a solute-binding protein (GsiB).

Its subcellular location is the periplasm. Part of the ABC transporter complex GsiABCD involved in glutathione import. Binds glutathione. This is Glutathione-binding protein GsiB from Shigella flexneri.